A 668-amino-acid polypeptide reads, in one-letter code: Fructose-1,6-bisphosphatase class 3 (668 aa).

It belongs to the FBPase class 3 family. The cofactor is Mn(2+).

The catalysed reaction is beta-D-fructose 1,6-bisphosphate + H2O = beta-D-fructose 6-phosphate + phosphate. It participates in carbohydrate biosynthesis; gluconeogenesis. This chain is Fructose-1,6-bisphosphatase class 3, found in Clostridium botulinum (strain Loch Maree / Type A3).